The sequence spans 52 residues: uncharacterized protein (52 aa).

Positions 1 to 52 (MVNNDAKIGRREFYDRVESVRPKSPPRERPTYTYSNSRTVDGYSNRGPRADF) are disordered. A compositionally biased stretch (basic and acidic residues) spans 7 to 30 (KIGRREFYDRVESVRPKSPPRERP).

This is an uncharacterized protein from Dictyostelium discoideum (Social amoeba).